The following is a 785-amino-acid chain: Adhesion G-protein coupled receptor G7 (785 aa).

An N-terminal signal peptide occupies residues 1–26; the sequence is MRSCRSCNVRVLVAIVCGLLTGIVLG. Topologically, residues 27-435 are extracellular; it reads LGIWRMVIRI…KYPKSLDILS (409 aa). Residues asparagine 82, asparagine 122, asparagine 133, asparagine 152, asparagine 159, asparagine 178, asparagine 195, asparagine 239, asparagine 289, asparagine 348, asparagine 400, and asparagine 408 are each glycosylated (N-linked (GlcNAc...) asparagine). A GAIN-B domain is found at 271-425; sequence FSVQKGSSNS…AVLMSFKKDY (155 aa). 2 disulfide bridges follow: cysteine 380-cysteine 407 and cysteine 395-cysteine 409. Residues 380 to 425 form a GPS region; it reads CVYWNFLINDWDTQGCQKTGNTTEFLRCNCSHTTNFAVLMSFKKDY. The helical transmembrane segment at 436 to 456 threads the bilayer; that stretch reads NIGCALSIAGLALTILFQILT. Over 457–465 the chain is Cytoplasmic; it reads RKIRKTSVT. The helical transmembrane segment at 466–486 threads the bilayer; the sequence is WVLVSLCSSMLIFNLLFVFGI. The Extracellular segment spans residues 487–523; it reads ENSNKNLKTSDSDINVKPENNKIPESDTIETPNPSCT. A helical transmembrane segment spans residues 524–544; it reads AIAALLHYFLLVTFTWNGLSA. Residues 545-561 lie on the Cytoplasmic side of the membrane; the sequence is TQLYFLLIRTMKPLPRH. Residues 562–582 form a helical membrane-spanning segment; it reads FIIFISLVGWGVPAIIVGVTI. Topologically, residues 583-623 are extracellular; the sequence is GSIYALSGNKRYWELDYRQEEICWLAVPKDNDYARSPLLWS. A helical membrane pass occupies residues 624-644; that stretch reads FIIPVTIILITNITIFVIITV. The Cytoplasmic portion of the chain corresponds to 645–668; that stretch reads KVLWKNNQNLTSTKKVSSLKKVFS. The chain crosses the membrane as a helical span at residues 669–689; sequence TLSIAVVFGVTWILAYAMLIS. At 690-694 the chain is on the extracellular side; sequence NDDIR. The helical transmembrane segment at 695–715 threads the bilayer; sequence IVFSYIFCLFNTTQGLQIFIL. The Cytoplasmic portion of the chain corresponds to 716–785; sequence YTVRTKVFQS…SGMTEETSLS (70 aa).

Belongs to the G-protein coupled receptor 2 family. Adhesion G-protein coupled receptor (ADGR) subfamily. In terms of tissue distribution, selectively expressed in the intestinal tissues.

The protein localises to the membrane. Functionally, orphan receptor. The polypeptide is Adhesion G-protein coupled receptor G7 (Adgrg7) (Mus musculus (Mouse)).